Reading from the N-terminus, the 84-residue chain is Small ribosomal subunit protein uS15 (84 aa).

This sequence belongs to the universal ribosomal protein uS15 family. Part of the 30S ribosomal subunit. Forms a bridge to the 50S subunit in the 70S ribosome, contacting the 23S rRNA.

One of the primary rRNA binding proteins, it binds directly to 16S rRNA where it helps nucleate assembly of the platform of the 30S subunit by binding and bridging several RNA helices of the 16S rRNA. Its function is as follows. Forms an intersubunit bridge (bridge B4) with the 23S rRNA of the 50S subunit in the ribosome. This chain is Small ribosomal subunit protein uS15, found in Fervidobacterium nodosum (strain ATCC 35602 / DSM 5306 / Rt17-B1).